A 201-amino-acid polypeptide reads, in one-letter code: ATP synthase subunit delta (201 aa).

It belongs to the ATPase delta chain family. F-type ATPases have 2 components, F(1) - the catalytic core - and F(0) - the membrane proton channel. F(1) has five subunits: alpha(3), beta(3), gamma(1), delta(1), epsilon(1). F(0) has three main subunits: a(1), b(2) and c(10-14). The alpha and beta chains form an alternating ring which encloses part of the gamma chain. F(1) is attached to F(0) by a central stalk formed by the gamma and epsilon chains, while a peripheral stalk is formed by the delta and b chains.

It is found in the cell inner membrane. Functionally, f(1)F(0) ATP synthase produces ATP from ADP in the presence of a proton or sodium gradient. F-type ATPases consist of two structural domains, F(1) containing the extramembraneous catalytic core and F(0) containing the membrane proton channel, linked together by a central stalk and a peripheral stalk. During catalysis, ATP synthesis in the catalytic domain of F(1) is coupled via a rotary mechanism of the central stalk subunits to proton translocation. This protein is part of the stalk that links CF(0) to CF(1). It either transmits conformational changes from CF(0) to CF(1) or is implicated in proton conduction. This Xanthobacter autotrophicus (strain ATCC BAA-1158 / Py2) protein is ATP synthase subunit delta.